Consider the following 317-residue polypeptide: Transaldolase 1 (317 aa).

Lysine 132 acts as the Schiff-base intermediate with substrate in catalysis.

The protein belongs to the transaldolase family. Type 1 subfamily. Homodimer.

The protein resides in the cytoplasm. The catalysed reaction is D-sedoheptulose 7-phosphate + D-glyceraldehyde 3-phosphate = D-erythrose 4-phosphate + beta-D-fructose 6-phosphate. It participates in carbohydrate degradation; pentose phosphate pathway; D-glyceraldehyde 3-phosphate and beta-D-fructose 6-phosphate from D-ribose 5-phosphate and D-xylulose 5-phosphate (non-oxidative stage): step 2/3. Functionally, transaldolase is important for the balance of metabolites in the pentose-phosphate pathway. The sequence is that of Transaldolase 1 from Salmonella paratyphi A (strain ATCC 9150 / SARB42).